Reading from the N-terminus, the 81-residue chain is Sulfur carrier protein TusA (81 aa).

Catalysis depends on Cys-19, which acts as the Cysteine persulfide intermediate.

Belongs to the sulfur carrier protein TusA family.

It localises to the cytoplasm. In terms of biological role, sulfur carrier protein which probably makes part of a sulfur-relay system. The protein is Sulfur carrier protein TusA of Shewanella baltica (strain OS223).